We begin with the raw amino-acid sequence, 397 residues long: Elongation factor Tu (397 aa).

In terms of domain architecture, tr-type G spans 10-206 (KPHVNIGTIG…AVDTSIPQPE (197 aa)). The interval 19–26 (GHIDHGKT) is G1. 19 to 26 (GHIDHGKT) provides a ligand contact to GTP. Residue threonine 26 coordinates Mg(2+). Positions 62–66 (GITIS) are G2. Residues 83 to 86 (DCPG) are G3. GTP-binding positions include 83–87 (DCPGH) and 138–141 (NKSD). The tract at residues 138–141 (NKSD) is G4. A G5 region spans residues 176 to 178 (SAL).

It belongs to the TRAFAC class translation factor GTPase superfamily. Classic translation factor GTPase family. EF-Tu/EF-1A subfamily. As to quaternary structure, monomer.

The protein resides in the cytoplasm. The enzyme catalyses GTP + H2O = GDP + phosphate + H(+). Its function is as follows. GTP hydrolase that promotes the GTP-dependent binding of aminoacyl-tRNA to the A-site of ribosomes during protein biosynthesis. This Salinispora tropica (strain ATCC BAA-916 / DSM 44818 / JCM 13857 / NBRC 105044 / CNB-440) protein is Elongation factor Tu.